The following is a 326-amino-acid chain: Acetyl-coenzyme A carboxylase carboxyl transferase subunit alpha (326 aa).

The region spanning 46–300 (EIEARAAELR…KEALLRHLDE (255 aa)) is the CoA carboxyltransferase C-terminal domain.

This sequence belongs to the AccA family. As to quaternary structure, acetyl-CoA carboxylase is a heterohexamer composed of biotin carboxyl carrier protein (AccB), biotin carboxylase (AccC) and two subunits each of ACCase subunit alpha (AccA) and ACCase subunit beta (AccD).

The protein localises to the cytoplasm. The catalysed reaction is N(6)-carboxybiotinyl-L-lysyl-[protein] + acetyl-CoA = N(6)-biotinyl-L-lysyl-[protein] + malonyl-CoA. It participates in lipid metabolism; malonyl-CoA biosynthesis; malonyl-CoA from acetyl-CoA: step 1/1. Functionally, component of the acetyl coenzyme A carboxylase (ACC) complex. First, biotin carboxylase catalyzes the carboxylation of biotin on its carrier protein (BCCP) and then the CO(2) group is transferred by the carboxyltransferase to acetyl-CoA to form malonyl-CoA. In Gloeobacter violaceus (strain ATCC 29082 / PCC 7421), this protein is Acetyl-coenzyme A carboxylase carboxyl transferase subunit alpha.